The following is a 216-amino-acid chain: Pyrrolidone-carboxylate peptidase (216 aa).

Residues Glu-80, Cys-143, and His-168 contribute to the active site.

Belongs to the peptidase C15 family. In terms of assembly, homotetramer.

The protein resides in the cytoplasm. The enzyme catalyses Release of an N-terminal pyroglutamyl group from a polypeptide, the second amino acid generally not being Pro.. Its function is as follows. Removes 5-oxoproline from various penultimate amino acid residues except L-proline. The protein is Pyrrolidone-carboxylate peptidase of Cupriavidus taiwanensis (strain DSM 17343 / BCRC 17206 / CCUG 44338 / CIP 107171 / LMG 19424 / R1) (Ralstonia taiwanensis (strain LMG 19424)).